The chain runs to 161 residues: Cyclic pyranopterin monophosphate synthase (161 aa).

Substrate-binding positions include 75-77 and 113-114; these read LCH and ME. D128 is an active-site residue.

It belongs to the MoaC family. Homohexamer; trimer of dimers.

The enzyme catalyses (8S)-3',8-cyclo-7,8-dihydroguanosine 5'-triphosphate = cyclic pyranopterin phosphate + diphosphate. The protein operates within cofactor biosynthesis; molybdopterin biosynthesis. Functionally, catalyzes the conversion of (8S)-3',8-cyclo-7,8-dihydroguanosine 5'-triphosphate to cyclic pyranopterin monophosphate (cPMP). The sequence is that of Cyclic pyranopterin monophosphate synthase from Salmonella typhi.